We begin with the raw amino-acid sequence, 306 residues long: tRNA dimethylallyltransferase (306 aa).

12 to 19 serves as a coordination point for ATP; that stretch reads GPTAAGKT. 14 to 19 contributes to the substrate binding site; the sequence is TAAGKT. Interaction with substrate tRNA stretches follow at residues 37-40, 161-165, and 242-247; these read DSAL, QRINR, and RCVGYR.

Belongs to the IPP transferase family. Monomer. Requires Mg(2+) as cofactor.

The enzyme catalyses adenosine(37) in tRNA + dimethylallyl diphosphate = N(6)-dimethylallyladenosine(37) in tRNA + diphosphate. Catalyzes the transfer of a dimethylallyl group onto the adenine at position 37 in tRNAs that read codons beginning with uridine, leading to the formation of N6-(dimethylallyl)adenosine (i(6)A). This chain is tRNA dimethylallyltransferase, found in Pseudoalteromonas translucida (strain TAC 125).